The chain runs to 264 residues: Isoprenyl transferase (264 aa).

Residue D43 is part of the active site. D43 lines the Mg(2+) pocket. Substrate-binding positions include 44-47, W48, R56, H60, and 88-90; these read GNGR and STE. The active-site Proton acceptor is the N91. Residues W92, R94, R211, and 217–219 each bind substrate; that span reads RTS. Position 230 (E230) interacts with Mg(2+).

The protein belongs to the UPP synthase family. Homodimer. Mg(2+) serves as cofactor.

Its function is as follows. Catalyzes the condensation of isopentenyl diphosphate (IPP) with allylic pyrophosphates generating different type of terpenoids. This is Isoprenyl transferase from Bifidobacterium longum (strain NCC 2705).